Reading from the N-terminus, the 179-residue chain is Protein GrpE (179 aa).

Basic and acidic residues predominate over residues 1 to 10; that stretch reads MSKKEEKQEE. Positions 1–23 are disordered; sequence MSKKEEKQEELQEEMEAVDAAGV.

It belongs to the GrpE family. As to quaternary structure, homodimer.

Its subcellular location is the cytoplasm. Participates actively in the response to hyperosmotic and heat shock by preventing the aggregation of stress-denatured proteins, in association with DnaK and GrpE. It is the nucleotide exchange factor for DnaK and may function as a thermosensor. Unfolded proteins bind initially to DnaJ; upon interaction with the DnaJ-bound protein, DnaK hydrolyzes its bound ATP, resulting in the formation of a stable complex. GrpE releases ADP from DnaK; ATP binding to DnaK triggers the release of the substrate protein, thus completing the reaction cycle. Several rounds of ATP-dependent interactions between DnaJ, DnaK and GrpE are required for fully efficient folding. The chain is Protein GrpE from Enterococcus faecalis (strain ATCC 700802 / V583).